The sequence spans 275 residues: Formamidopyrimidine-DNA glycosylase (275 aa).

Pro2 serves as the catalytic Schiff-base intermediate with DNA. The active-site Proton donor is Glu3. Lys58 (proton donor; for beta-elimination activity) is an active-site residue. His89, Arg108, and Lys151 together coordinate DNA. An FPG-type; degenerate zinc finger spans residues 236–275 (KVYDRAGQPCERCPGPAACAGISRTVQSGRATYFCARTQK). The active-site Proton donor; for delta-elimination activity is the Arg265.

The protein belongs to the FPG family. As to quaternary structure, monomer. Zn(2+) serves as cofactor.

The enzyme catalyses Hydrolysis of DNA containing ring-opened 7-methylguanine residues, releasing 2,6-diamino-4-hydroxy-5-(N-methyl)formamidopyrimidine.. The catalysed reaction is 2'-deoxyribonucleotide-(2'-deoxyribose 5'-phosphate)-2'-deoxyribonucleotide-DNA = a 3'-end 2'-deoxyribonucleotide-(2,3-dehydro-2,3-deoxyribose 5'-phosphate)-DNA + a 5'-end 5'-phospho-2'-deoxyribonucleoside-DNA + H(+). Functionally, involved in base excision repair of DNA damaged by oxidation or by mutagenic agents. Acts as a DNA glycosylase that recognizes and removes damaged bases. Has a preference for oxidized purines, such as 7,8-dihydro-8-oxoguanine (8-oxoG). Has AP (apurinic/apyrimidinic) lyase activity and introduces nicks in the DNA strand. Cleaves the DNA backbone by beta-delta elimination to generate a single-strand break at the site of the removed base with both 3'- and 5'-phosphates. The protein is Formamidopyrimidine-DNA glycosylase of Acidiphilium cryptum (strain JF-5).